The following is a 123-amino-acid chain: Large ribosomal subunit protein bL20 (123 aa).

The protein belongs to the bacterial ribosomal protein bL20 family.

In terms of biological role, binds directly to 23S ribosomal RNA and is necessary for the in vitro assembly process of the 50S ribosomal subunit. It is not involved in the protein synthesizing functions of that subunit. This Chlamydia trachomatis serovar L2b (strain UCH-1/proctitis) protein is Large ribosomal subunit protein bL20.